The chain runs to 173 residues: Protein-export protein SecB 1 (173 aa).

Belongs to the SecB family. As to quaternary structure, homotetramer, a dimer of dimers. One homotetramer interacts with 1 SecA dimer.

It localises to the cytoplasm. In terms of biological role, one of the proteins required for the normal export of preproteins out of the cell cytoplasm. It is a molecular chaperone that binds to a subset of precursor proteins, maintaining them in a translocation-competent state. It also specifically binds to its receptor SecA. This chain is Protein-export protein SecB 1, found in Gluconobacter oxydans (strain 621H) (Gluconobacter suboxydans).